The following is a 168-amino-acid chain: CS3 fimbrial subunit A (168 aa).

The signal sequence occupies residues 1–22 (MLKIKYLLIGLSLSAMSSYSLA).

Post-translationally, a longer minor form, starting at amino acid 15, has been detected by amino acid sequencing. This is probably due to alternative processing of the signal peptide.

Its subcellular location is the fimbrium. Its function is as follows. Fimbriae (also called pili), polar filaments radiating from the surface of the bacterium to a length of 0.5-1.5 micrometers and numbering 100-300 per cell, enable bacteria to colonize the epithelium of specific host organs. This chain is CS3 fimbrial subunit A, found in Escherichia coli.